The sequence spans 513 residues: Na(+)/H(+) antiporter NhaB (513 aa).

Transmembrane regions (helical) follow at residues 23-43, 52-72, 97-117, 120-140, 144-164, 202-222, 238-258, 303-323, 348-368, 391-411, 447-467, and 475-495; these read LALI…PFVA, IFTL…LLAI, LLLM…LFIF, LLLS…AAAF, FLDA…FYGI, LMMH…VGEP, FFLR…LTCL, AIIG…VGLI, TESL…AVII, LFYI…VGTI, ATPN…APLI, and VWMA…CVEF.

It belongs to the NhaB Na(+)/H(+) (TC 2.A.34) antiporter family.

The protein localises to the cell inner membrane. It carries out the reaction 2 Na(+)(in) + 3 H(+)(out) = 2 Na(+)(out) + 3 H(+)(in). In terms of biological role, na(+)/H(+) antiporter that extrudes sodium in exchange for external protons. The sequence is that of Na(+)/H(+) antiporter NhaB from Escherichia coli (strain 55989 / EAEC).